The sequence spans 229 residues: Triosephosphate isomerase (229 aa).

Asn6–Lys8 serves as a coordination point for substrate. The active-site Electrophile is the His85. The active-site Proton acceptor is Glu152. Residues Gly158 and Ser188 each contribute to the substrate site.

It belongs to the triosephosphate isomerase family. In terms of assembly, homodimer.

The protein resides in the cytoplasm. The catalysed reaction is D-glyceraldehyde 3-phosphate = dihydroxyacetone phosphate. It participates in carbohydrate biosynthesis; gluconeogenesis. It functions in the pathway carbohydrate degradation; glycolysis; D-glyceraldehyde 3-phosphate from glycerone phosphate: step 1/1. Involved in the gluconeogenesis. Catalyzes stereospecifically the conversion of dihydroxyacetone phosphate (DHAP) to D-glyceraldehyde-3-phosphate (G3P). The sequence is that of Triosephosphate isomerase from Campylobacter curvus (strain 525.92).